The chain runs to 204 residues: Recombination protein RecR (204 aa).

The segment at 58–75 (CSVCQNVTDREEDPCSIC) adopts a C4-type zinc-finger fold. In terms of domain architecture, Toprim spans 83–181 (TVICVVESPV…EVTKIARGIP (99 aa)).

This sequence belongs to the RecR family.

May play a role in DNA repair. It seems to be involved in an RecBC-independent recombinational process of DNA repair. It may act with RecF and RecO. This Chlorobium luteolum (strain DSM 273 / BCRC 81028 / 2530) (Pelodictyon luteolum) protein is Recombination protein RecR.